We begin with the raw amino-acid sequence, 194 residues long: Peptidyl-tRNA hydrolase (194 aa).

Tyr-17 is a tRNA binding site. His-22 serves as the catalytic Proton acceptor. TRNA is bound by residues Phe-68, Asn-70, and Asn-116.

The protein belongs to the PTH family. As to quaternary structure, monomer.

It is found in the cytoplasm. The enzyme catalyses an N-acyl-L-alpha-aminoacyl-tRNA + H2O = an N-acyl-L-amino acid + a tRNA + H(+). Functionally, hydrolyzes ribosome-free peptidyl-tRNAs (with 1 or more amino acids incorporated), which drop off the ribosome during protein synthesis, or as a result of ribosome stalling. Its function is as follows. Catalyzes the release of premature peptidyl moieties from peptidyl-tRNA molecules trapped in stalled 50S ribosomal subunits, and thus maintains levels of free tRNAs and 50S ribosomes. This Haemophilus ducreyi (strain 35000HP / ATCC 700724) protein is Peptidyl-tRNA hydrolase.